Reading from the N-terminus, the 667-residue chain is Small ribosomal subunit protein mS39 (667 aa).

A mitochondrion-targeting transit peptide spans 1 to 11 (MASSCSQALRH). The interval 199 to 226 (EAEQRSEEMEDIQDETQTKKGRSPKASD) is disordered. PPR repeat units lie at residues 249–283 (NTRS…RLKA), 284–323 (DVHI…KVKP), 324–360 (NLLT…SIEP), 361–400 (SLAS…SFTP), 482–516 (SSNA…GHGN), and 565–599 (TASS…NRVP).

It belongs to the mitochondrion-specific ribosomal protein mS39 family.

The protein localises to the mitochondrion. Functionally, mitochondrial RNA-binding protein that may have a role in mitochondrial translation. This chain is Small ribosomal subunit protein mS39 (ptcd3), found in Danio rerio (Zebrafish).